The sequence spans 366 residues: Class I histocompatibility antigen, Gogo-C*0202 alpha chain (366 aa).

Positions 1 to 24 are cleaved as a signal peptide; sequence MRVMAPRTLILLLSGALALTETWA. The alpha-1 stretch occupies residues 25 to 114; it reads GSHSMRYFYT…LRGYYNQSED (90 aa). Topologically, residues 25 to 308 are extracellular; sequence GSHSMRYFYT…EPSSQPTIPI (284 aa). N-linked (GlcNAc...) asparagine glycosylation occurs at asparagine 110. The interval 115 to 206 is alpha-2; the sequence is GSHTLQSMYG…ENGKETLQRA (92 aa). Intrachain disulfides connect cysteine 125–cysteine 188 and cysteine 227–cysteine 283. The segment at 207–298 is alpha-3; that stretch reads EPPKTHVTHH…GLPEPLTLRW (92 aa). The 89-residue stretch at 209-297 folds into the Ig-like C1-type domain; it reads PKTHVTHHPL…EGLPEPLTLR (89 aa). The tract at residues 299–308 is connecting peptide; sequence EPSSQPTIPI. The chain crosses the membrane as a helical span at residues 309-332; that stretch reads VGIVVGLAVLVVLAVLGAVVTAMM. At 333-366 the chain is on the cytoplasmic side; it reads CRRKSSGGKGGSCSQAACSNSAQGSDESLITCKA.

This sequence belongs to the MHC class I family. In terms of assembly, heterodimer of an alpha chain and a beta chain (beta-2-microglobulin).

It is found in the membrane. Its function is as follows. Involved in the presentation of foreign antigens to the immune system. The protein is Class I histocompatibility antigen, Gogo-C*0202 alpha chain of Gorilla gorilla gorilla (Western lowland gorilla).